The following is a 68-amino-acid chain: Conotoxin Cal14.13b (68 aa).

An N-terminal signal peptide occupies residues 1–20; sequence MKLCVVIVLLMLAMPFNGGE. Residues 21–68 constitute a propeptide that is removed on maturation; the sequence is ASRFFNQHARSQRSGMKTRGIWCDPPCPEGETCRGGECSDEFNGDMGR. The residue at position 66 (M66) is a Methionine amide.

Post-translationally, contains 2 disulfide bonds. In terms of tissue distribution, expressed by the venom duct.

It localises to the secreted. Its function is as follows. Probable neurotoxin with unknown target. Possibly targets ion channels. This chain is Conotoxin Cal14.13b, found in Californiconus californicus (California cone).